The following is a 225-amino-acid chain: ATP synthase subunit a (225 aa).

Transmembrane regions (helical) follow at residues 18-38 (LSLN…MFWL), 73-93 (ILIS…FPYI), 100-120 (MTLT…FGWI), 126-146 (MFTH…MVLI), 156-176 (GTLA…LTLL), and 187-207 (IMLF…AVAM).

This sequence belongs to the ATPase A chain family. As to quaternary structure, F-type ATPases have 2 components, CF(1) - the catalytic core - and CF(0) - the membrane proton channel. CF(1) has five subunits: alpha(3), beta(3), gamma(1), delta(1), epsilon(1). CF(0) has three main subunits: a, b and c.

The protein resides in the mitochondrion inner membrane. Mitochondrial membrane ATP synthase (F(1)F(0) ATP synthase or Complex V) produces ATP from ADP in the presence of a proton gradient across the membrane which is generated by electron transport complexes of the respiratory chain. F-type ATPases consist of two structural domains, F(1) - containing the extramembraneous catalytic core and F(0) - containing the membrane proton channel, linked together by a central stalk and a peripheral stalk. During catalysis, ATP synthesis in the catalytic domain of F(1) is coupled via a rotary mechanism of the central stalk subunits to proton translocation. Key component of the proton channel; it may play a direct role in the translocation of protons across the membrane. In Locusta migratoria (Migratory locust), this protein is ATP synthase subunit a (ATP6).